We begin with the raw amino-acid sequence, 622 residues long: DNA mismatch repair protein MutL (622 aa).

Basic and acidic residues predominate over residues 399–414 (SSQNFHPDENDYRAEE). Residues 399 to 422 (SSQNFHPDENDYRAEEASPAEENP) form a disordered region.

This sequence belongs to the DNA mismatch repair MutL/HexB family.

Its function is as follows. This protein is involved in the repair of mismatches in DNA. It is required for dam-dependent methyl-directed DNA mismatch repair. May act as a 'molecular matchmaker', a protein that promotes the formation of a stable complex between two or more DNA-binding proteins in an ATP-dependent manner without itself being part of a final effector complex. This Phocaeicola vulgatus (strain ATCC 8482 / DSM 1447 / JCM 5826 / CCUG 4940 / NBRC 14291 / NCTC 11154) (Bacteroides vulgatus) protein is DNA mismatch repair protein MutL.